The sequence spans 61 residues: Probable tautomerase SERP0934 (61 aa).

Pro2 serves as the catalytic Proton acceptor; via imino nitrogen.

It belongs to the 4-oxalocrotonate tautomerase family.

The chain is Probable tautomerase SERP0934 from Staphylococcus epidermidis (strain ATCC 35984 / DSM 28319 / BCRC 17069 / CCUG 31568 / BM 3577 / RP62A).